We begin with the raw amino-acid sequence, 185 residues long: Pap fimbrial major pilin protein (185 aa).

The N-terminal stretch at 1-22 (MIKSVIAGAVAMAVVSFGVNNA) is a signal peptide. C44 and C83 are oxidised to a cystine.

The protein belongs to the fimbrial protein family.

The protein localises to the secreted. It is found in the fimbrium. Its function is as follows. Polymerizes to form the thick (6.8 nm in diameter) rod of the pilus (also called fimbria). The rod is a right-handed helical cylinder with 3.28 PapA subunits per turn. Pili are polar filaments radiating from the surface of the bacterium to a length of 0.5-1.5 micrometers and numbering 100-300 per cell, and enable bacteria to colonize the epithelium of specific host organs. The chain is Pap fimbrial major pilin protein (papA) from Escherichia coli.